The following is a 280-amino-acid chain: Borealin (280 aa).

A required for interaction with INCENP region spans residues 1–58; sequence MAPRKGSSRVAKTNSLRRRKLASFLKDFDREVEIRIKQIESDRQNLLKEVDNLYNIEI. The segment at 1-88 is required for centromere localization; it reads MAPRKGSSRV…NKQALEEAAT (88 aa). Positions 1 to 140 are required for interaction with SENP3; that stretch reads MAPRKGSSRV…ENERKNLQTA (140 aa). The required to form a minimal CPC core complex that localizes to the central spindle and midbody and properly executes the role of the CPC during cytokinesis stretch occupies residues 10-109; that stretch reads VAKTNSLRRR…TAEAIQTPLK (100 aa). Residues 20 to 78 form a required for interaction with INCENP and BIRC5 region; that stretch reads KLASFLKDFDREVEIRIKQIESDRQNLLKEVDNLYNIEILRLPKALREMNWLDYFALGG. Residues threonine 88 and threonine 94 each carry the phosphothreonine; by TTK modification. Residue threonine 106 is modified to Phosphothreonine. A Phosphoserine modification is found at serine 110. Positions 130-169 are disordered; the sequence is EENERKNLQTARVKRCPPSKKRTQSIQGKGKGKRSSRANT. Lysine 135 is covalently cross-linked (Glycyl lysine isopeptide (Lys-Gly) (interchain with G-Cter in SUMO2)). Basic residues predominate over residues 141 to 152; sequence RVKRCPPSKKRT. Position 165 is a phosphoserine; by AURKB (serine 165). Position 169 is a phosphothreonine; by TTK (threonine 169). Phosphothreonine occurs at positions 189 and 204. Serine 219 and serine 224 each carry phosphoserine. Residue threonine 230 is modified to Phosphothreonine; by TTK. 2 positions are modified to phosphoserine: serine 238 and serine 244.

It belongs to the borealin family. In terms of assembly, may form homooligomers and homodimers. Component of the chromosomal passenger complex (CPC) composed of at least BIRC5/survivin, CDCA8/borealin, INCENP, AURKB or AURKC; in the complex forms a triple-helix bundle-based subcomplex with INCENP and BIRC5. Interacts with SENP3, UBE2I and RANBP2. Interacts (phosphorylated) with SGO1 and SGO2; the association is dependent on CDK1. In terms of processing, phosphorylated by TTK, essentially at Thr-88, Thr94, Thr-169 and Thr-230. Phosphorylation (probably by CDK1) promotes targeting of the CPC to centromeric DNA. Sumoylated by UBE2I and RANBP2. Desumoylated by SENP3 through the removal of SUMO2 and SUMO3.

It localises to the nucleus. Its subcellular location is the nucleolus. It is found in the cytoplasm. The protein localises to the chromosome. The protein resides in the centromere. It localises to the cytoskeleton. Its subcellular location is the spindle. Functionally, component of the chromosomal passenger complex (CPC), a complex that acts as a key regulator of mitosis. The CPC complex has essential functions at the centromere in ensuring correct chromosome alignment and segregation and is required for chromatin-induced microtubule stabilization and spindle assembly. In the complex, it may be required to direct the CPC to centromeric DNA. This Pongo abelii (Sumatran orangutan) protein is Borealin (CDCA8).